A 723-amino-acid chain; its full sequence is Choline transporter-like protein 4 (723 aa).

Over 1–36 (MGKKKQEEEQNSSEYGAPAQYDPTFNGPIHKRSCTD) the chain is Cytoplasmic. The helical transmembrane segment at 37 to 57 (IICCVLFMLVITGYMVVGILA) threads the bilayer. Topologically, residues 58-245 (WLYGDPRHVL…RIFEDFAKTW (188 aa)) are extracellular. Residues Asn-71, Asn-202, Asn-211, and Asn-219 are each glycosylated (N-linked (GlcNAc...) asparagine). The helical transmembrane segment at 246-266 (QWIVAGLVIAMVVSVLFLLLL) threads the bilayer. Over 267-269 (RFT) the chain is Cytoplasmic. A helical membrane pass occupies residues 270-290 (APVLIWILIFGVLAVGAFGIW). Over 291-325 (YCYNDYMSLASSNLTFSNVGFTTNVQVYLQVRDTW) the chain is Extracellular. N-linked (GlcNAc...) asparagine glycosylation occurs at Asn-303. The helical transmembrane segment at 326-346 (LAFLIILCIVEAVLILALIFL) threads the bilayer. Topologically, residues 347-374 (RTRILIAIALIQETSKALGHMMSTLLYP) are cytoplasmic. A helical transmembrane segment spans residues 375-395 (VVTFVLLLVCVSYWGITALYL). Residues 396-464 (ATSGAPIYKV…RNLFNLQIYN (69 aa)) are Extracellular-facing. Residues Asn-409, Asn-421, and Asn-430 are each glycosylated (N-linked (GlcNAc...) asparagine). Residues 465 to 485 (VVAFLWCVNFVIALGHCTLAG) form a helical membrane-spanning segment. At 486-516 (AFASYYWAFSKPADIPTFPLTQSFMRALRYH) the chain is on the cytoplasmic side. The helical transmembrane segment at 517–537 (VGSLAFGALILTLVQIVRIIL) threads the bilayer. The Extracellular segment spans residues 538–578 (EYLDHKFKAAQNPCARFLMCCLKCCFWCLEKFIKFINRNAY). The chain crosses the membrane as a helical span at residues 579–599 (IMIAIYGKNFCVSAKNAFFLL). Residues 600-615 (MRNIVRVVVLDKVTDL) lie on the Cytoplasmic side of the membrane. Residues 616 to 636 (LLFFGKLLVVGGIGVLAFFFF) form a helical membrane-spanning segment. The Extracellular segment spans residues 637-655 (SGRIQLPGNTFQTAALNYY). A helical membrane pass occupies residues 656-676 (WMPIITVVFGAYLIAHGFFSV). The Cytoplasmic portion of the chain corresponds to 677 to 723 (YNMGVDTLFLCFLEDLERNDGSAEKPYFMSKNLMKILNKKNKQPKTG).

This sequence belongs to the CTL (choline transporter-like) family.

It localises to the membrane. The protein localises to the apical cell membrane. It catalyses the reaction choline(out) + n H(+)(in) = choline(in) + n H(+)(out). It carries out the reaction thiamine diphosphate(out) = thiamine diphosphate(in). Functionally, choline transporter that seems to play a role in the choline-acetylcholine system and is required to the efferent innervation of hair cells in the olivocochlear bundle for the maintenance of physiological function of outer hair cells and the protection of hair cells from acoustic injury. Also described as a thiamine pyrophosphate transporter. The chain is Choline transporter-like protein 4 (slc44a4) from Danio rerio (Zebrafish).